The chain runs to 110 residues: UPF0060 membrane protein RPA3838 (110 aa).

4 helical membrane-spanning segments follow: residues 4-24 (LLTF…FWAW), 31-51 (PLWL…LTLA), 59-79 (AYAA…WAIE), and 85-105 (QWDV…LFGP).

It belongs to the UPF0060 family.

The protein resides in the cell inner membrane. In Rhodopseudomonas palustris (strain ATCC BAA-98 / CGA009), this protein is UPF0060 membrane protein RPA3838.